Consider the following 43-residue polypeptide: Cytin chain A (43 aa).

It belongs to the protease inhibitor I13 (potato type I serine protease inhibitor) family. In terms of assembly, heterodimer of an A chain and a B chain, linked by a disulfide bond.

Functionally, inhibitor of chymotrypsin. This Theromyzon tessulatum (Duck leech) protein is Cytin chain A.